Consider the following 362-residue polypeptide: Dihydroorotate dehydrogenase (quinone) (362 aa).

FMN-binding positions include 60-64 (AGFDK) and Thr84. Residue Lys64 coordinates substrate. Position 109-113 (109-113 (NRMGF)) interacts with substrate. The FMN site is built by Asn137 and Asn168. Asn168 lines the substrate pocket. The Nucleophile role is filled by Ser171. Position 173 (Asn173) interacts with substrate. FMN-binding residues include Lys213 and Ser241. 242–243 (NT) provides a ligand contact to substrate. FMN contacts are provided by residues Gly264, Gly293, and 314–315 (YS).

Belongs to the dihydroorotate dehydrogenase family. Type 2 subfamily. In terms of assembly, monomer. Requires FMN as cofactor.

It localises to the cell membrane. It carries out the reaction (S)-dihydroorotate + a quinone = orotate + a quinol. Its pathway is pyrimidine metabolism; UMP biosynthesis via de novo pathway; orotate from (S)-dihydroorotate (quinone route): step 1/1. In terms of biological role, catalyzes the conversion of dihydroorotate to orotate with quinone as electron acceptor. The protein is Dihydroorotate dehydrogenase (quinone) of Bartonella henselae (strain ATCC 49882 / DSM 28221 / CCUG 30454 / Houston 1) (Rochalimaea henselae).